Reading from the N-terminus, the 782-residue chain is Host cell factor homolog hcf-1 (782 aa).

A disordered region spans residues 1-25 (MDEDVGLEATNYSRGDESRSEEQEK). Over residues 14–25 (RGDESRSEEQEK) the composition is skewed to basic and acidic residues. Kelch repeat units lie at residues 55-103 (LIVI…SLGN), 105-151 (IYRF…RIGH), 161-222 (KAYV…IYEK), 227-271 (RMVV…PRSL), and 280-324 (KMFV…VPLH). Phosphoserine is present on residues S423, S431, and S449. Residues 423–434 (SPIKRATTSPRK) show a composition bias toward polar residues. The segment at 423–553 (SPIKRATTSP…EENGDDDLPW (131 aa)) is disordered. Composition is skewed to polar residues over residues 456-469 (TAPS…TTYT) and 496-513 (TASP…SSTC). S498 carries the post-translational modification Phosphoserine. The span at 537–552 (GETDEMKEENGDDDLP) shows a compositional bias: acidic residues.

Interacts with daf-16/FOXO. Interacts with deacetylase sir-2.1. Interacts with the 14-3-3 family proteins ftt-2 and par-5. In terms of processing, phosphorylated at multiple serine residues. Phosphorylation is developmentally regulated, occurring in embryos but not L1 larvae. Phosphorylation may be cell-cycle-regulated.

Its subcellular location is the nucleus. Its function is as follows. Transcriptional coregulator. Involved in control of the cell cycle and in modulating mitotic histone phosphorylation. Plays a role in modulating lifespan by regulating the transcriptional activity of daf-16/Forkhead box protein O, in concert with protein deacetylase sir-2.1/SIRT1, and perhaps acting independently of the Insulin/IGF-1-like signaling (IIS) mediated pathway. Negatively modulates responses to environmental stresses, including oxidative stress, heat stress, and exposure to heavy metals; acting via regulation of the transcription factors daf-16 and skn-1. May play a role in pharyngeal development via positive modulation of expression of sup-35. This is Host cell factor homolog hcf-1 from Caenorhabditis elegans.